We begin with the raw amino-acid sequence, 434 residues long: Mitochondrial distribution and morphology protein 10 (434 aa).

It belongs to the MDM10 family. As to quaternary structure, component of the ER-mitochondria encounter structure (ERMES) or MDM complex, composed of mmm1, mdm10, mdm12 and mdm34. Associates with the mitochondrial outer membrane sorting assembly machinery SAM(core) complex.

Its subcellular location is the mitochondrion outer membrane. In terms of biological role, component of the ERMES/MDM complex, which serves as a molecular tether to connect the endoplasmic reticulum and mitochondria. Components of this complex are involved in the control of mitochondrial shape and protein biogenesis and may function in phospholipid exchange. mdm10 is involved in the late assembly steps of the general translocase of the mitochondrial outer membrane (TOM complex). Functions in the tom40-specific route of the assembly of outer membrane beta-barrel proteins, including the association of tom40 with the receptor tom22 and small TOM proteins. Can associate with the SAM(core) complex as well as the mdm12-mmm1 complex, both involved in late steps of the major beta-barrel assembly pathway, that is responsible for biogenesis of all outer membrane beta-barrel proteins. May act as a switch that shuttles between both complexes and channels precursor proteins into the tom40-specific pathway. Plays a role in mitochondrial morphology and in the inheritance of mitochondria. The sequence is that of Mitochondrial distribution and morphology protein 10 (mdmB) from Aspergillus niger (strain ATCC MYA-4892 / CBS 513.88 / FGSC A1513).